The sequence spans 409 residues: uncharacterized protein (409 aa).

The next 12 membrane-spanning stretches (helical) occupy residues 3–23 (IIVKIPVWMLLSLFILSPTTE), 43–63 (ITQITSTLYFLGFAVGILSLG), 73–93 (PIVLLGLFIYIVSSIISIFSV), 95–115 (IEMLMIARFIQAFGVSVGSVI), 135–155 (ILSPWLLFIPSLGSYIGGYII), 162–182 (YVFVFFSLIGTILLALYYKIL), 209–229 (ILWLYAFIIGAFNGIYYGFFI), 248–268 (KLAFLLSFSAIFGGFLGGYLI), 283–303 (FIFSLCGCILFVVNAFILEFI), 309–329 (LAISMIFVPMMIHIIGHSLLI), 346–366 (TAGSIFGAIYYIVIAAVTYCV), and 379–399 (LLCLVSSISSVISFYYICILY).

This sequence belongs to the major facilitator superfamily. Bcr/CmlA family.

Its subcellular location is the cell inner membrane. This is an uncharacterized protein from Rickettsia typhi (strain ATCC VR-144 / Wilmington).